Consider the following 339-residue polypeptide: Glycerol-3-phosphate dehydrogenase [NAD(P)+] (339 aa).

NADPH is bound by residues Ser15, Tyr16, His36, and Lys110. 3 residues coordinate sn-glycerol 3-phosphate: Lys110, Gly139, and Thr141. Position 143 (Ala143) interacts with NADPH. Residues Lys195, Asp248, Ser258, Arg259, and Asn260 each contribute to the sn-glycerol 3-phosphate site. Lys195 serves as the catalytic Proton acceptor. An NADPH-binding site is contributed by Arg259. NADPH contacts are provided by Val283 and Glu285.

Belongs to the NAD-dependent glycerol-3-phosphate dehydrogenase family.

Its subcellular location is the cytoplasm. It carries out the reaction sn-glycerol 3-phosphate + NAD(+) = dihydroxyacetone phosphate + NADH + H(+). The enzyme catalyses sn-glycerol 3-phosphate + NADP(+) = dihydroxyacetone phosphate + NADPH + H(+). The protein operates within membrane lipid metabolism; glycerophospholipid metabolism. Catalyzes the reduction of the glycolytic intermediate dihydroxyacetone phosphate (DHAP) to sn-glycerol 3-phosphate (G3P), the key precursor for phospholipid synthesis. The polypeptide is Glycerol-3-phosphate dehydrogenase [NAD(P)+] (Yersinia pseudotuberculosis serotype O:1b (strain IP 31758)).